We begin with the raw amino-acid sequence, 546 residues long: Glucose-6-phosphate isomerase (546 aa).

Catalysis depends on glutamate 353, which acts as the Proton donor. Residues histidine 384 and lysine 512 contribute to the active site.

This sequence belongs to the GPI family.

It is found in the cytoplasm. It carries out the reaction alpha-D-glucose 6-phosphate = beta-D-fructose 6-phosphate. Its pathway is carbohydrate biosynthesis; gluconeogenesis. It functions in the pathway carbohydrate degradation; glycolysis; D-glyceraldehyde 3-phosphate and glycerone phosphate from D-glucose: step 2/4. In terms of biological role, catalyzes the reversible isomerization of glucose-6-phosphate to fructose-6-phosphate. The protein is Glucose-6-phosphate isomerase of Methylococcus capsulatus (strain ATCC 33009 / NCIMB 11132 / Bath).